The primary structure comprises 290 residues: 4-hydroxy-tetrahydrodipicolinate synthase (290 aa).

T44 contacts pyruvate. Y132 acts as the Proton donor/acceptor in catalysis. K160 (schiff-base intermediate with substrate) is an active-site residue. I202 is a binding site for pyruvate.

Belongs to the DapA family. In terms of assembly, homotetramer; dimer of dimers.

It is found in the cytoplasm. It catalyses the reaction L-aspartate 4-semialdehyde + pyruvate = (2S,4S)-4-hydroxy-2,3,4,5-tetrahydrodipicolinate + H2O + H(+). The protein operates within amino-acid biosynthesis; L-lysine biosynthesis via DAP pathway; (S)-tetrahydrodipicolinate from L-aspartate: step 3/4. In terms of biological role, catalyzes the condensation of (S)-aspartate-beta-semialdehyde [(S)-ASA] and pyruvate to 4-hydroxy-tetrahydrodipicolinate (HTPA). This Geotalea uraniireducens (strain Rf4) (Geobacter uraniireducens) protein is 4-hydroxy-tetrahydrodipicolinate synthase.